The chain runs to 529 residues: Lysine--tRNA ligase (529 aa).

Residues 29–37 (ISGSVHIGN) carry the 'HIGH' region motif. The 'KMSKS' region motif lies at 274-278 (AMSKS). An ATP-binding site is contributed by Lys-277.

Belongs to the class-I aminoacyl-tRNA synthetase family.

It is found in the cytoplasm. It carries out the reaction tRNA(Lys) + L-lysine + ATP = L-lysyl-tRNA(Lys) + AMP + diphosphate. The protein is Lysine--tRNA ligase of Methanosphaera stadtmanae (strain ATCC 43021 / DSM 3091 / JCM 11832 / MCB-3).